Consider the following 141-residue polypeptide: Large ribosomal subunit protein uL16 (141 aa).

The protein belongs to the universal ribosomal protein uL16 family. As to quaternary structure, part of the 50S ribosomal subunit.

Functionally, binds 23S rRNA and is also seen to make contacts with the A and possibly P site tRNAs. The sequence is that of Large ribosomal subunit protein uL16 from Nostoc punctiforme (strain ATCC 29133 / PCC 73102).